A 4249-amino-acid polypeptide reads, in one-letter code: Fibrocystin-L (4249 aa).

Positions 1–20 (MGHLWLSGTWFLFGLLWCAA) are cleaved as a signal peptide. Over 21–4222 (DSHKGSSETI…TPVQTLAVIT (4202 aa)) the chain is Extracellular. 14 IPT/TIG domains span residues 31–132 (PKVT…GVAS), 146–255 (PTIR…KMTY), 270–361 (PEVV…ILEY), 1067–1153 (PLIL…HFIY), 1155–1234 (SQIS…SFSY), 1240–1323 (PVVT…KLNA), 1329–1468 (LEVI…SFSY), 1565–1648 (PSII…TLTK), 1658–1742 (PNID…SFSY), 1748–1827 (PYVT…NLTI), 1830–1909 (PAVA…SFTY), 1915–1996 (PFLK…AFEY), 1998–2084 (LSIQ…LFTY), and 2090–2175 (PLIT…DFLY). The region spanning 337–492 (PGGRGLKVEV…NVFTEQQTGD (156 aa)) is the PA14 domain. O-linked (GalNAc...) threonine glycosylation is found at Thr-1297 and Thr-1359. An O-linked (GalNAc...) threonine glycan is attached at Thr-1838. Residues 2183–2303 (SSWGGSPPPE…IPVVWTRLTH (121 aa)) enclose the G8 1 domain. 5 PbH1 repeats span residues 2484–2506 (QFKSYVKGCAIHQSYNRAITIHN), 2507–2529 (THHLLVERNIIYDIKGGAFFIED), 2565–2587 (NPNNTIRHNAAAGGTHFGFWYRM), 2664–2686 (GGALQFHNFVMVNNNEAGIETKR), and 2732–2755 (SQGLTVSSVHFMNFDRHACVALGV). In terms of domain architecture, G8 2 spans 3035–3173 (SFWQSSPENN…HSVYKTKLLE (139 aa)). PbH1 repeat units follow at residues 3292–3314 (KGNARISNVEFHHSGQEGYRDST), 3354–3376 (TDGVDIDDNIIYFTVGEGIRIWG), 3415–3437 (GTNTVLQNNVVAGFGRVGYRIDG), 3470–3492 (PGCSLIQGFTIWTCWDYGIYFQT), and 3493–3514 (TESVHIYNVTLVNNGMSIFSMV). Thr-3735 carries an O-linked (GalNAc...) threonine glycan. Residues 4183 to 4208 (LSAQSVPGGSGSSPGSGSSSSGHSKA) form a disordered region. Low complexity predominate over residues 4197–4208 (GSGSSSSGHSKA). The helical transmembrane segment at 4223-4243 (ACLVGRLLLLEVFMAAVFILN) threads the bilayer. The Cytoplasmic segment spans residues 4244 to 4249 (TTVGIN).

As to expression, expressed in neurons in the hippocampus and the cerebral cortex (at protein level). Transiently expressed at high levels in inner ear hair cells, predominantly in outer hair cells, during early postnatal development (at protein level).

The protein localises to the membrane. It localises to the cell projection. Its subcellular location is the stereocilium membrane. Its function is as follows. Component of hair-cell stereocilia coat. Required for normal hearing. The polypeptide is Fibrocystin-L (Pkhd1l1) (Mus musculus (Mouse)).